Consider the following 397-residue polypeptide: MNIHEYQAKALLKGYGAPVAEGVAILKAEEAEAAAKSLPGPLYVVKSQIHAGGRGKGKFKELSPEAKGGVRLAKSVEDVVANVKEMLGNTLVTAQTGEAGKQVNRLYIEDGADIERELYCSLLVDRSVGKVAFVVSTEGGMDIEAVAHDTPEKIQTIAIDPETGVTAADVAKISSALKLDGAAGEDAKSLFPLLYKAFNEKDMSLLEINPLIVMKNGHLRVLDAKMSFDGNALFRHDDVRALRDETEEDAKEIEASKWDLAYVALDGNIGCMVNGAGLAMATMDIIKLYGKEPANFCDVGGGAGKEKVAAAFKIITADPKVEGILVNIFGGIMKCDVIAEGVIAAVKEVGLKVPLVVRLEGTNVELGKKILNESGLAITAADDLDDAAKKIVAAING.

Residues 9 to 254 (KALLKGYGAP…ETEEDAKEIE (246 aa)) form the ATP-grasp domain. Residues Lys-46, 53-55 (GRG), Glu-109, Ala-112, and Glu-117 contribute to the ATP site. Mg(2+) is bound by residues Asn-209 and Asp-223. Substrate contacts are provided by residues Asn-274 and 331-333 (GIM).

Belongs to the succinate/malate CoA ligase beta subunit family. As to quaternary structure, heterotetramer of two alpha and two beta subunits. Requires Mg(2+) as cofactor.

It catalyses the reaction succinate + ATP + CoA = succinyl-CoA + ADP + phosphate. The enzyme catalyses GTP + succinate + CoA = succinyl-CoA + GDP + phosphate. Its pathway is carbohydrate metabolism; tricarboxylic acid cycle; succinate from succinyl-CoA (ligase route): step 1/1. In terms of biological role, succinyl-CoA synthetase functions in the citric acid cycle (TCA), coupling the hydrolysis of succinyl-CoA to the synthesis of either ATP or GTP and thus represents the only step of substrate-level phosphorylation in the TCA. The beta subunit provides nucleotide specificity of the enzyme and binds the substrate succinate, while the binding sites for coenzyme A and phosphate are found in the alpha subunit. This is Succinate--CoA ligase [ADP-forming] subunit beta from Rhizobium etli (strain CIAT 652).